Consider the following 65-residue polypeptide: Sec-independent protein translocase protein TatA (65 aa).

Residues 1–21 (MFGLGGQELVLILLIILLLFG) form a helical membrane-spanning segment.

This sequence belongs to the TatA/E family. Forms a complex with TatC.

It localises to the cell inner membrane. In terms of biological role, part of the twin-arginine translocation (Tat) system that transports large folded proteins containing a characteristic twin-arginine motif in their signal peptide across membranes. TatA could form the protein-conducting channel of the Tat system. This chain is Sec-independent protein translocase protein TatA, found in Chlorobium phaeobacteroides (strain DSM 266 / SMG 266 / 2430).